The primary structure comprises 354 residues: Fructose-1,6-bisphosphatase class 1 (354 aa).

4 residues coordinate Mg(2+): Glu112, Asp134, Leu136, and Asp137. Residues 137–140 (DGSS), Asn229, Tyr257, and Lys287 contribute to the substrate site. Glu293 is a Mg(2+) binding site.

Belongs to the FBPase class 1 family. In terms of assembly, homotetramer. The cofactor is Mg(2+).

Its subcellular location is the cytoplasm. The enzyme catalyses beta-D-fructose 1,6-bisphosphate + H2O = beta-D-fructose 6-phosphate + phosphate. It participates in carbohydrate biosynthesis; Calvin cycle. The polypeptide is Fructose-1,6-bisphosphatase class 1 (Trichodesmium erythraeum (strain IMS101)).